The chain runs to 175 residues: General stress protein 14 (175 aa).

Belongs to the NAD(P)H dehydrogenase (quinone) family.

The polypeptide is General stress protein 14 (ywrO) (Bacillus subtilis (strain 168)).